The following is a 551-amino-acid chain: Probable aldehyde dehydrogenase (551 aa).

278–283 (GSSRVA) provides a ligand contact to NAD(+). The active-site Proton acceptor is Glu297. Catalysis depends on Cys332, which acts as the Nucleophile.

The protein belongs to the aldehyde dehydrogenase family. In uninfected plants, highest levels found in stems. In plants infected with the flax rust, highest levels in leaves. Higher levels of expression in infected leaves than uninfected stems.

It carries out the reaction an aldehyde + NAD(+) + H2O = a carboxylate + NADH + 2 H(+). In terms of biological role, could be involved in facilitating the biotrophic relationship between the plant and the rust fungus. This chain is Probable aldehyde dehydrogenase (FIS1), found in Linum usitatissimum (Flax).